The chain runs to 504 residues: uncharacterized protein (504 aa).

The disordered stretch occupies residues 431-483 (GEAEKYRKLQDGDEDEEGTGKPEPKKARRKGFGGKFAPKHEEKVTRAVGVNSE).

It belongs to the CBF/MAK21 family.

This is an uncharacterized protein from Caenorhabditis elegans.